We begin with the raw amino-acid sequence, 49 residues long: Large ribosomal subunit protein bL33C (49 aa).

The tract at residues 20 to 49 is disordered; sequence NKNKRNNPDRLEKQKYCPRERKVTLHRETK. Positions 25 to 49 are enriched in basic and acidic residues; that stretch reads NNPDRLEKQKYCPRERKVTLHRETK.

The protein belongs to the bacterial ribosomal protein bL33 family.

In Enterococcus faecalis (strain ATCC 700802 / V583), this protein is Large ribosomal subunit protein bL33C (rpmG3).